The primary structure comprises 306 residues: Homoserine kinase (306 aa).

95-105 (PQSRGLGSSAA) contacts ATP.

This sequence belongs to the GHMP kinase family. Homoserine kinase subfamily.

The protein resides in the cytoplasm. The catalysed reaction is L-homoserine + ATP = O-phospho-L-homoserine + ADP + H(+). Its pathway is amino-acid biosynthesis; L-threonine biosynthesis; L-threonine from L-aspartate: step 4/5. Its function is as follows. Catalyzes the ATP-dependent phosphorylation of L-homoserine to L-homoserine phosphate. The protein is Homoserine kinase of Corynebacterium urealyticum (strain ATCC 43042 / DSM 7109).